Reading from the N-terminus, the 426-residue chain is Enolase (426 aa).

Q165 contacts (2R)-2-phosphoglycerate. E209 (proton donor) is an active-site residue. Mg(2+) is bound by residues D244, E287, and D313. 4 residues coordinate (2R)-2-phosphoglycerate: K338, R367, S368, and K389. K338 serves as the catalytic Proton acceptor.

Belongs to the enolase family. Mg(2+) is required as a cofactor.

Its subcellular location is the cytoplasm. It localises to the secreted. It is found in the cell surface. The enzyme catalyses (2R)-2-phosphoglycerate = phosphoenolpyruvate + H2O. It functions in the pathway carbohydrate degradation; glycolysis; pyruvate from D-glyceraldehyde 3-phosphate: step 4/5. Catalyzes the reversible conversion of 2-phosphoglycerate (2-PG) into phosphoenolpyruvate (PEP). It is essential for the degradation of carbohydrates via glycolysis. This is Enolase from Methanococcus maripaludis (strain DSM 14266 / JCM 13030 / NBRC 101832 / S2 / LL).